The chain runs to 281 residues: Octanoyl-[GcvH]:protein N-octanoyltransferase (281 aa).

Residues 44 to 250 enclose the BPL/LPL catalytic domain; sequence GESAATMRSW…TLQQFAPKLT (207 aa). Cys-149 acts as the Acyl-thioester intermediate in catalysis.

The protein belongs to the octanoyltransferase LipL family.

The catalysed reaction is N(6)-octanoyl-L-lysyl-[glycine-cleavage complex H protein] + L-lysyl-[lipoyl-carrier protein] = N(6)-octanoyl-L-lysyl-[lipoyl-carrier protein] + L-lysyl-[glycine-cleavage complex H protein]. Its pathway is protein modification; protein lipoylation via endogenous pathway; protein N(6)-(lipoyl)lysine from octanoyl-[acyl-carrier-protein]. Catalyzes the amidotransfer (transamidation) of the octanoyl moiety from octanoyl-GcvH to the lipoyl domain of the E2 subunit of lipoate-dependent enzymes. This Bacillus anthracis protein is Octanoyl-[GcvH]:protein N-octanoyltransferase.